We begin with the raw amino-acid sequence, 354 residues long: Probable L-ascorbate-6-phosphate lactonase UlaG (354 aa).

It belongs to the UlaG family. Requires a divalent metal cation as cofactor.

The protein localises to the cytoplasm. The enzyme catalyses L-ascorbate 6-phosphate + H2O = 3-dehydro-L-gulonate 6-phosphate. It participates in cofactor degradation; L-ascorbate degradation; D-xylulose 5-phosphate from L-ascorbate: step 1/4. In terms of biological role, probably catalyzes the hydrolysis of L-ascorbate-6-P into 3-keto-L-gulonate-6-P. Is essential for L-ascorbate utilization under anaerobic conditions. The sequence is that of Probable L-ascorbate-6-phosphate lactonase UlaG from Escherichia coli O45:K1 (strain S88 / ExPEC).